Consider the following 490-residue polypeptide: GTPase Der (490 aa).

2 EngA-type G domains span residues 3 to 167 (FTLA…DAFE) and 203 to 378 (LQVA…EVWN). Residues 9-16 (GRPNVGKS), 56-60 (DTAGL), 119-122 (NKAE), 209-216 (GRPNAGKS), 256-260 (DTAGM), and 321-324 (NKWD) contribute to the GTP site. The KH-like domain occupies 379–465 (RRVPTAALNR…RLTMRSQSDA (87 aa)). The interval 451 to 490 (PGTPIRLTMRSQSDANPYKNRKKSTPSRLRKHLGKPSLKG) is disordered. A compositionally biased stretch (basic residues) spans 469–484 (KNRKKSTPSRLRKHLG).

It belongs to the TRAFAC class TrmE-Era-EngA-EngB-Septin-like GTPase superfamily. EngA (Der) GTPase family. In terms of assembly, associates with the 50S ribosomal subunit.

In terms of biological role, GTPase that plays an essential role in the late steps of ribosome biogenesis. This chain is GTPase Der, found in Dinoroseobacter shibae (strain DSM 16493 / NCIMB 14021 / DFL 12).